Consider the following 114-residue polypeptide: FK506-binding protein 1 (114 aa).

The region spanning 26–114 (GDLVTIHYTG…IFEVELLKVN (89 aa)) is the PPIase FKBP-type domain.

It belongs to the FKBP-type PPIase family. FKBP1 subfamily.

The protein resides in the cytoplasm. It catalyses the reaction [protein]-peptidylproline (omega=180) = [protein]-peptidylproline (omega=0). Inhibited by both FK506 and rapamycin. In terms of biological role, PPIases accelerate the folding of proteins. It catalyzes the cis-trans isomerization of proline imidic peptide bonds in oligopeptides. The chain is FK506-binding protein 1 (FPR1) from Eremothecium gossypii (strain ATCC 10895 / CBS 109.51 / FGSC 9923 / NRRL Y-1056) (Yeast).